The chain runs to 260 residues: MIRVDGRTTDQLRDVTIERGWQEHAEGSALISAGRTRVLCAASVTEGVPRWRKGSGLGWVTAEYSMLPRATHTRNDRESVRGRIGGRTHEISRLIGRSLRAAIDLKALGENTIAIDCDVLLADGGTRTAAITGAYVALADACRWLGRPAAIVTSVCAVSVGVVGGVPMLDLAYTEDSTADTDMNVVRTGAGGFVEVQGTAEGTPFERSTLDELLDLAVAGCTRLTEIQNAALAAPPAAGPPAPERAGAGSGSGGKGTGSR.

Phosphate is bound by residues arginine 87 and 125–127 (GTR). Residues 232-260 (LAAPPAAGPPAPERAGAGSGSGGKGTGSR) form a disordered region. Over residues 248 to 260 (AGSGSGGKGTGSR) the composition is skewed to gly residues.

Belongs to the RNase PH family. Homohexameric ring arranged as a trimer of dimers.

It carries out the reaction tRNA(n+1) + phosphate = tRNA(n) + a ribonucleoside 5'-diphosphate. Its function is as follows. Phosphorolytic 3'-5' exoribonuclease that plays an important role in tRNA 3'-end maturation. Removes nucleotide residues following the 3'-CCA terminus of tRNAs; can also add nucleotides to the ends of RNA molecules by using nucleoside diphosphates as substrates, but this may not be physiologically important. Probably plays a role in initiation of 16S rRNA degradation (leading to ribosome degradation) during starvation. The sequence is that of Ribonuclease PH from Parafrankia sp. (strain EAN1pec).